A 281-amino-acid polypeptide reads, in one-letter code: Nucleotide-binding protein Noc_2797 (281 aa).

Residue 8–15 coordinates ATP; the sequence is GVSGSGKS. 58 to 61 serves as a coordination point for GTP; sequence DARN.

The protein belongs to the RapZ-like family.

In terms of biological role, displays ATPase and GTPase activities. In Nitrosococcus oceani (strain ATCC 19707 / BCRC 17464 / JCM 30415 / NCIMB 11848 / C-107), this protein is Nucleotide-binding protein Noc_2797.